The chain runs to 302 residues: L-threonate dehydrogenase (302 aa).

Residues 7–35 (FHVGIVGLGSMGMGAALSYVRAGLSTWGA) and threonine 102 each bind NAD(+). Residue lysine 178 is part of the active site. Residue lysine 246 coordinates NAD(+).

Belongs to the HIBADH-related family. L-threonate dehydrogenase subfamily.

The catalysed reaction is L-threonate + NAD(+) = 2-dehydro-L-erythronate + NADH + H(+). Its function is as follows. Catalyzes oxidation of L-threonate to 2-oxo-tetronate. Can use either NAD(+) or NADP(+) as cosubstrate, with a preference for NAD(+). The sequence is that of L-threonate dehydrogenase from Escherichia coli (strain K12).